A 258-amino-acid chain; its full sequence is Probable parvulin-type peptidyl-prolyl cis-trans isomerase (258 aa).

The N-terminal stretch at 1-19 (MKRIAMLAAACVIAVPAFA) is a signal peptide. The region spanning 127-219 (KMEYKVRHIL…FGWHVIQVDD (93 aa)) is the PpiC domain. The span at 158–175 (DDLAKKNSKDPGSAERGG) shows a compositional bias: basic and acidic residues. The disordered stretch occupies residues 158–178 (DDLAKKNSKDPGSAERGGDLG).

This sequence belongs to the PpiC/parvulin rotamase family.

It carries out the reaction [protein]-peptidylproline (omega=180) = [protein]-peptidylproline (omega=0). The protein is Probable parvulin-type peptidyl-prolyl cis-trans isomerase of Bordetella bronchiseptica (strain ATCC BAA-588 / NCTC 13252 / RB50) (Alcaligenes bronchisepticus).